A 507-amino-acid polypeptide reads, in one-letter code: Maturase K (507 aa).

It belongs to the intron maturase 2 family. MatK subfamily.

The protein resides in the plastid. The protein localises to the chloroplast. Functionally, usually encoded in the trnK tRNA gene intron. Probably assists in splicing its own and other chloroplast group II introns. This is Maturase K from Robinia pseudoacacia (Black locust).